The chain runs to 632 residues: tRNA uridine 5-carboxymethylaminomethyl modification enzyme MnmG (632 aa).

Residues 15 to 20 (GAGHAG), Val127, and Ser182 contribute to the FAD site. 276–290 (GARYCPSIEDKIVRF) lines the NAD(+) pocket. An FAD-binding site is contributed by Gln373.

It belongs to the MnmG family. Homodimer. Heterotetramer of two MnmE and two MnmG subunits. It depends on FAD as a cofactor.

It is found in the cytoplasm. In terms of biological role, NAD-binding protein involved in the addition of a carboxymethylaminomethyl (cmnm) group at the wobble position (U34) of certain tRNAs, forming tRNA-cmnm(5)s(2)U34. This Enterococcus faecalis (strain ATCC 700802 / V583) protein is tRNA uridine 5-carboxymethylaminomethyl modification enzyme MnmG.